We begin with the raw amino-acid sequence, 149 residues long: Arginine repressor (149 aa).

This sequence belongs to the ArgR family.

The protein resides in the cytoplasm. It participates in amino-acid biosynthesis; L-arginine biosynthesis [regulation]. Regulates arginine biosynthesis genes. The chain is Arginine repressor from Bacillus pumilus (strain SAFR-032).